A 355-amino-acid chain; its full sequence is Na(+)/H(+) exchange regulatory cofactor NHE-RF1 (355 aa).

Serine 2 bears the N-acetylserine mark. Serine 2 and serine 46 each carry phosphoserine. The 81-residue stretch at 14–94 (LCCLEKGPNG…AVRLLVVDPE (81 aa)) folds into the PDZ 1 domain. 2 stretches are compositionally biased toward basic and acidic residues: residues 110 to 119 (LLRPQEKSEQ) and 127 to 146 (DTHE…RELR). The interval 110-146 (LLRPQEKSEQAEPPAAADTHEAGDQNEAEKSHLRELR) is disordered. In terms of domain architecture, PDZ 2 spans 149–229 (LCTMKKGPNG…EAKLLVVDKE (81 aa)). The interval 244 to 355 (EHLDGPLPEP…SKKNELFSNL (112 aa)) is disordered. Residues 259–268 (IQKESSREAL) show a composition bias toward basic and acidic residues. A phosphoserine mark is found at serine 264, serine 275, serine 285, and serine 286. Over residues 270 to 286 (EPASESPRPALARSASS) the composition is skewed to low complexity. Threonine 288 is modified (phosphothreonine). Serine 289, serine 294, and serine 297 each carry phosphoserine. Low complexity predominate over residues 303-323 (STEPSSTSSSSSDPILDLNIS). Residues 345–355 (WSKKNELFSNL) show a composition bias toward basic and acidic residues.

Homodimer, and heterodimer with NHERF2. Binds the N-termini of EZR, RDX and MSN. Binds the C-termini of PDGFRA, PDGFRB, ADRB2 and NOS2. Binds ARHGAP17, EPI64, RACK1, OPRK1, GNAQ, CTNNB1, PLCB3 and CLCN3. Forms a complex with CFTR and SLC4A7. Forms a complex with SLC4A7 and ATP6V1B1. Binds PDZK1. Binds the C-terminus of PAG1. In resting T-cells, part of a PAG1-NHERF1-MSN complex which is disrupted upon TCR activation. Directly interacts with HTR4. Interacts with MCC. Interacts with TRPC4 (via the PDZ-binding domain). Interacts (via the PDZ 1 domain) with PODXL (via the C-terminal PDZ-binding motif DTHL); interaction is not detected in glomerular epithelium cells. Interacts (via the PDZ 1 domain) with PODXL (via the C-terminal PDZ-binding motif DTHL); the interaction take place early in the secretory pathway and is necessary for its apical membrane sorting. Interacts with SLC34A1. Interacts with CFTR, SLC26A3 and SLC26A6. Interacts (via PDZ domains) with ACE2 (via PDZ-binding motif); the interaction may enhance ACE2 membrane residence. Expressed in spermatogenic cells.

The protein localises to the cytoplasm. Its subcellular location is the apical cell membrane. It localises to the cell projection. The protein resides in the filopodium. It is found in the ruffle. The protein localises to the microvillus. Its subcellular location is the endomembrane system. Its function is as follows. Scaffold protein that connects plasma membrane proteins with members of the ezrin/moesin/radixin family and thereby helps to link them to the actin cytoskeleton and to regulate their surface expression. Necessary for recycling of internalized ADRB2. Was first known to play a role in the regulation of the activity and subcellular location of SLC9A3. Necessary for cAMP-mediated phosphorylation and inhibition of SLC9A3. May enhance Wnt signaling. May participate in HTR4 targeting to microvilli. Involved in the regulation of phosphate reabsorption in the renal proximal tubules. Involved in sperm capacitation. May participate in the regulation of the chloride and bicarbonate homeostasis in spermatozoa. This chain is Na(+)/H(+) exchange regulatory cofactor NHE-RF1 (Nherf1), found in Mus musculus (Mouse).